Consider the following 420-residue polypeptide: UDP-N-acetylglucosamine 1-carboxyvinyltransferase (420 aa).

23 to 24 lines the phosphoenolpyruvate pocket; the sequence is KN. R92 contributes to the UDP-N-acetyl-alpha-D-glucosamine binding site. The active-site Proton donor is the C116. C116 carries the post-translational modification 2-(S-cysteinyl)pyruvic acid O-phosphothioketal. UDP-N-acetyl-alpha-D-glucosamine is bound by residues 121–125, 161–164, D306, and I328; these read RPVDL and KVSV.

It belongs to the EPSP synthase family. MurA subfamily.

Its subcellular location is the cytoplasm. It carries out the reaction phosphoenolpyruvate + UDP-N-acetyl-alpha-D-glucosamine = UDP-N-acetyl-3-O-(1-carboxyvinyl)-alpha-D-glucosamine + phosphate. The protein operates within cell wall biogenesis; peptidoglycan biosynthesis. Cell wall formation. Adds enolpyruvyl to UDP-N-acetylglucosamine. In Photobacterium profundum (strain SS9), this protein is UDP-N-acetylglucosamine 1-carboxyvinyltransferase.